Consider the following 146-residue polypeptide: VHLTGEEKTAVTNLWAKVNVDEVGGEALGRLLVVYPWTQRFFESFGDLSSPDAIMGNPKVKAHGKKVLNSFSEGLKNLDNLKGTFAKLSELHCDKLHVDPENFRLLGNVLVCVLAHHFGKEFTPQVQAAYQKVVAGVANALAHKYH.

V1 carries the post-translational modification N-acetylvaline. Residues H2–H146 form the Globin domain. The residue at position 12 (T12) is a Phosphothreonine. S44 carries the phosphoserine modification. Residue K59 is modified to N6-acetyllysine. H63 serves as a coordination point for heme b. K82 carries the post-translational modification N6-acetyllysine. H92 contributes to the heme b binding site. C93 carries the post-translational modification S-nitrosocysteine. K144 is subject to N6-acetyllysine.

This sequence belongs to the globin family. As to quaternary structure, heterotetramer of two alpha chains and two beta chains. In terms of tissue distribution, red blood cells.

Involved in oxygen transport from the lung to the various peripheral tissues. This Nasua nasua (Ring-tailed coati) protein is Hemoglobin subunit beta (HBB).